The primary structure comprises 86 residues: Kappa-theraphotoxin-Cg1a 1 (86 aa).

The first 21 residues, 1 to 21 (MKVSVLITLAVLGVMFVWASA), serve as a signal peptide directing secretion. The propeptide occupies 22 to 50 (AELEERGSDQRDSPAWLKSMERIFQSGER). Intrachain disulfides connect Cys-52–Cys-66, Cys-59–Cys-71, and Cys-65–Cys-78. The interval 55-56 (MF) is involved in active face. Phe-84 is modified (phenylalanine amide).

The protein belongs to the neurotoxin 10 (Hwtx-1) family. 28 (Jztx-11) subfamily. As to expression, expressed by the venom gland.

Its subcellular location is the secreted. This toxin acts as a voltage-dependent gating-modifier. It inhibits the sodium conductance (IC(50)=124 nM) and slows the fast inactivation (EC(50)=1180 nM) of Nav1.5/SCN5A. It significantly shifts the activation to more depolarized voltages and decreases the deactivation of Nav1.5 currents upon extreme depolarization, but only slightly affects voltage-dependence of steady-state inactivation. In addition, this toxin causes an approximately five-fold decrease in the rate of recovery from inactivation and an approximately 1.9-fold reduction in the closed-state inactivation rate. This toxin integrates the functions of site 3 toxins (alpha-scorpion toxins) with site 4 toxins (beta-scorpion and spider toxins) by targeting multiple sites on Nav1.5. Also shows inhibition of voltage-gated potassium channels (5 uM completely inhibits Kv2.1/KCNB1, whereas 5 uM moderately inhibits Kv4.2/KCND2 Kv4.1/KCND1 channels). The sequence is that of Kappa-theraphotoxin-Cg1a 1 from Chilobrachys guangxiensis (Chinese earth tiger tarantula).